Here is a 421-residue protein sequence, read N- to C-terminus: 3-oxoacyl-[acyl-carrier-protein] synthase 2 (421 aa).

The Ketosynthase family 3 (KS3) domain occupies 1–417; the sequence is MRRVVITGTG…GTNASLILRR (417 aa). Active-site for beta-ketoacyl synthase activity residues include Cys-170, His-311, and His-347.

Belongs to the thiolase-like superfamily. Beta-ketoacyl-ACP synthases family. As to quaternary structure, homodimer.

It catalyses the reaction a fatty acyl-[ACP] + malonyl-[ACP] + H(+) = a 3-oxoacyl-[ACP] + holo-[ACP] + CO2. The catalysed reaction is (9Z)-hexadecenoyl-[ACP] + malonyl-[ACP] + H(+) = 3-oxo-(11Z)-octadecenoyl-[ACP] + holo-[ACP] + CO2. It functions in the pathway lipid metabolism; fatty acid biosynthesis. Functionally, involved in the type II fatty acid elongation cycle. Catalyzes the elongation of a wide range of acyl-ACP by the addition of two carbons from malonyl-ACP to an acyl acceptor. Can efficiently catalyze the conversion of palmitoleoyl-ACP (cis-hexadec-9-enoyl-ACP) to cis-vaccenoyl-ACP (cis-octadec-11-enoyl-ACP), an essential step in the thermal regulation of fatty acid composition. This Rhizobium meliloti (strain 1021) (Ensifer meliloti) protein is 3-oxoacyl-[acyl-carrier-protein] synthase 2 (fabF).